We begin with the raw amino-acid sequence, 442 residues long: Elongation factor 1-alpha 1 (442 aa).

The 223-residue stretch at 5–227 folds into the tr-type G domain; the sequence is KEHLNLVVIG…AALDSFKIPK (223 aa). A G1 region spans residues 14–21; it reads GHVDSGKS. 14 to 21 is a GTP binding site; the sequence is GHVDSGKS. The tract at residues 70–74 is G2; it reads GITID. Positions 91–94 are G3; the sequence is DAPG. Residues 91–95 and 153–156 each bind GTP; these read DAPGH and NKMD. The G4 stretch occupies residues 153–156; sequence NKMD. The tract at residues 194-196 is G5; it reads SGF.

This sequence belongs to the TRAFAC class translation factor GTPase superfamily. Classic translation factor GTPase family. EF-Tu/EF-1A subfamily.

Its subcellular location is the cytoplasm. This protein promotes the GTP-dependent binding of aminoacyl-tRNA to the A-site of ribosomes during protein biosynthesis. The chain is Elongation factor 1-alpha 1 (EFA1) from Euplotes crassus.